The chain runs to 407 residues: UDP-N-acetyl-D-mannosamine dehydrogenase (407 aa).

It belongs to the UDP-glucose/GDP-mannose dehydrogenase family.

The catalysed reaction is UDP-N-acetyl-alpha-D-mannosamine + 2 NAD(+) + H2O = UDP-N-acetyl-alpha-D-mannosaminouronate + 2 NADH + 3 H(+). Its pathway is capsule biogenesis; capsule polysaccharide biosynthesis. In terms of biological role, dehydrogenase involved in the biosynthesis of capsular polysaccharides. Catalyzes the NAD(+)-dependent oxidation of UDP-N-acetyl-D-mannosamine (UDP-ManNAc) to UDP-N-acetyl-D-mannosaminuronic acid (UDP-ManNAcA). This is UDP-N-acetyl-D-mannosamine dehydrogenase from Campylobacter jejuni.